Consider the following 479-residue polypeptide: Alliin lyase (479 aa).

Residues Met1–Ser25 form the signal peptide. The propeptide occupies Phe26–Ala34. Residues Glu47–Ala93 form the EGF-like; atypical domain. N-linked (GlcNAc...) asparagine glycosylation occurs at Asn53. 3 cysteine pairs are disulfide-bonded: Cys54-Cys73, Cys75-Cys84, and Cys78-Cys91. Tyr126–Phe134 provides a ligand contact to chloride. N-linked (GlcNAc...) asparagine glycosylation is found at Asn180 and Asn225. Lys285 carries the post-translational modification N6-(pyridoxal phosphate)lysine. 2 N-linked (GlcNAc...) asparagine glycosylation sites follow: Asn342 and Asn362. Cys402 and Cys410 are disulfide-bonded.

The protein belongs to the alliinase family. In terms of assembly, homodimer. Pyridoxal 5'-phosphate is required as a cofactor.

The protein localises to the vacuole. It carries out the reaction an S-alkyl-L-cysteine S-oxide = an S-alkyl sulfenate + 2-aminoprop-2-enoate. In Allium cepa (Onion), this protein is Alliin lyase.